The chain runs to 354 residues: UDP-N-acetylglucosamine--N-acetylmuramyl-(pentapeptide) pyrophosphoryl-undecaprenol N-acetylglucosamine transferase (354 aa).

UDP-N-acetyl-alpha-D-glucosamine contacts are provided by residues 15-17, Asn-127, Arg-163, Ser-191, Ile-244, 263-268, and Gln-288; these read TGG and ALTVSE.

This sequence belongs to the glycosyltransferase 28 family. MurG subfamily.

It localises to the cell inner membrane. The catalysed reaction is di-trans,octa-cis-undecaprenyl diphospho-N-acetyl-alpha-D-muramoyl-L-alanyl-D-glutamyl-meso-2,6-diaminopimeloyl-D-alanyl-D-alanine + UDP-N-acetyl-alpha-D-glucosamine = di-trans,octa-cis-undecaprenyl diphospho-[N-acetyl-alpha-D-glucosaminyl-(1-&gt;4)]-N-acetyl-alpha-D-muramoyl-L-alanyl-D-glutamyl-meso-2,6-diaminopimeloyl-D-alanyl-D-alanine + UDP + H(+). It functions in the pathway cell wall biogenesis; peptidoglycan biosynthesis. In terms of biological role, cell wall formation. Catalyzes the transfer of a GlcNAc subunit on undecaprenyl-pyrophosphoryl-MurNAc-pentapeptide (lipid intermediate I) to form undecaprenyl-pyrophosphoryl-MurNAc-(pentapeptide)GlcNAc (lipid intermediate II). This chain is UDP-N-acetylglucosamine--N-acetylmuramyl-(pentapeptide) pyrophosphoryl-undecaprenol N-acetylglucosamine transferase, found in Vibrio cholerae serotype O1 (strain ATCC 39541 / Classical Ogawa 395 / O395).